The primary structure comprises 273 residues: Dermonecrotic toxin LhSicTox-alphaIA2ai (273 aa).

His-5 is an active-site residue. 2 residues coordinate Mg(2+): Glu-25 and Asp-27. Residue His-41 is the Nucleophile of the active site. 2 disulfides stabilise this stretch: Cys-45-Cys-51 and Cys-47-Cys-190. Asp-85 contacts Mg(2+).

Belongs to the arthropod phospholipase D family. Class II subfamily. The cofactor is Mg(2+). Expressed by the venom gland.

The protein resides in the secreted. It catalyses the reaction an N-(acyl)-sphingosylphosphocholine = an N-(acyl)-sphingosyl-1,3-cyclic phosphate + choline. The enzyme catalyses an N-(acyl)-sphingosylphosphoethanolamine = an N-(acyl)-sphingosyl-1,3-cyclic phosphate + ethanolamine. The catalysed reaction is a 1-acyl-sn-glycero-3-phosphocholine = a 1-acyl-sn-glycero-2,3-cyclic phosphate + choline. It carries out the reaction a 1-acyl-sn-glycero-3-phosphoethanolamine = a 1-acyl-sn-glycero-2,3-cyclic phosphate + ethanolamine. In terms of biological role, dermonecrotic toxins cleave the phosphodiester linkage between the phosphate and headgroup of certain phospholipids (sphingolipid and lysolipid substrates), forming an alcohol (often choline) and a cyclic phosphate. This toxin acts on sphingomyelin (SM). It may also act on ceramide phosphoethanolamine (CPE), lysophosphatidylcholine (LPC) and lysophosphatidylethanolamine (LPE), but not on lysophosphatidylserine (LPS), and lysophosphatidylglycerol (LPG). It acts by transphosphatidylation, releasing exclusively cyclic phosphate products as second products. Induces dermonecrosis, hemolysis, increased vascular permeability, edema, inflammatory response, and platelet aggregation. In Loxosceles hirsuta (Recluse spider), this protein is Dermonecrotic toxin LhSicTox-alphaIA2ai.